A 419-amino-acid chain; its full sequence is Glutamate-1-semialdehyde 2,1-aminomutase (419 aa).

Lys-259 carries the post-translational modification N6-(pyridoxal phosphate)lysine.

This sequence belongs to the class-III pyridoxal-phosphate-dependent aminotransferase family. HemL subfamily. It depends on pyridoxal 5'-phosphate as a cofactor.

Its subcellular location is the cytoplasm. It catalyses the reaction (S)-4-amino-5-oxopentanoate = 5-aminolevulinate. It participates in porphyrin-containing compound metabolism; protoporphyrin-IX biosynthesis; 5-aminolevulinate from L-glutamyl-tRNA(Glu): step 2/2. The protein is Glutamate-1-semialdehyde 2,1-aminomutase (hemL) of Sulfurisphaera tokodaii (strain DSM 16993 / JCM 10545 / NBRC 100140 / 7) (Sulfolobus tokodaii).